We begin with the raw amino-acid sequence, 99 residues long: Acylphosphatase (99 aa).

Residues 5–97 (VRQVMIRGRV…RPGERFSQLP (93 aa)) form the Acylphosphatase-like domain. Active-site residues include Arg-20 and Asn-38.

Belongs to the acylphosphatase family.

It catalyses the reaction an acyl phosphate + H2O = a carboxylate + phosphate + H(+). This Nitrobacter winogradskyi (strain ATCC 25391 / DSM 10237 / CIP 104748 / NCIMB 11846 / Nb-255) protein is Acylphosphatase (acyP).